Consider the following 118-residue polypeptide: Large ribosomal subunit protein uL18 (118 aa).

It belongs to the universal ribosomal protein uL18 family. As to quaternary structure, part of the 50S ribosomal subunit; part of the 5S rRNA/L5/L18/L25 subcomplex. Contacts the 5S and 23S rRNAs.

In terms of biological role, this is one of the proteins that bind and probably mediate the attachment of the 5S RNA into the large ribosomal subunit, where it forms part of the central protuberance. The chain is Large ribosomal subunit protein uL18 from Myxococcus xanthus (strain DK1622).